The following is a 437-amino-acid chain: uncharacterized protein (437 aa).

The segment covering 63-87 (PSSANVSFQNSDDNLSTSRGRSASP) has biased composition (polar residues). Disordered stretches follow at residues 63–97 (PSSA…SNFP), 112–147 (VKKD…KKET), and 346–437 (PKNA…YSIW). Over residues 399–409 (EALSPSKSNPD) the composition is skewed to polar residues. Low complexity predominate over residues 425 to 437 (KKPSSSSSNYSIW).

This is an uncharacterized protein from Caenorhabditis elegans.